A 469-amino-acid chain; its full sequence is Cell division protein FtsP (469 aa).

Residues 1–27 constitute a signal peptide (tat-type signal); that stretch reads MKLSRRQFLQRSTLAGVATVTPTSLWA.

It belongs to the FtsP family. Post-translationally, predicted to be exported by the Tat system. The position of the signal peptide cleavage has not been experimentally proven.

The protein localises to the periplasm. Cell division protein that is required for growth during stress conditions. May be involved in protecting or stabilizing the divisomal assembly under conditions of stress. The chain is Cell division protein FtsP from Glaesserella parasuis serovar 5 (strain SH0165) (Haemophilus parasuis).